A 163-amino-acid polypeptide reads, in one-letter code: MAGPVPPHPGLAVRAAALHPAPLRIFPGLAELPDLSRGSAARPALAQSLPGIGCGPRDPPASLPAPRRLSGLCARRRSQASLSAGVARADAPLCSGFRAGHACGTGTQPQPTLSSRSSSLTSAEVQLPQFLAQVDNYRHKPLKLECPVAGISIDLSQLSLQLQ.

Expressed in keratinocytes.

This is an uncharacterized protein from Homo sapiens (Human).